Here is a 442-residue protein sequence, read N- to C-terminus: UDP-N-acetylglucosamine 1-carboxyvinyltransferase (442 aa).

22-23 lines the phosphoenolpyruvate pocket; sequence KN. Arginine 94 contacts UDP-N-acetyl-alpha-D-glucosamine. Aspartate 119 (proton donor) is an active-site residue. Residues aspartate 309 and valine 331 each contribute to the UDP-N-acetyl-alpha-D-glucosamine site.

The protein belongs to the EPSP synthase family. MurA subfamily.

Its subcellular location is the cytoplasm. The catalysed reaction is phosphoenolpyruvate + UDP-N-acetyl-alpha-D-glucosamine = UDP-N-acetyl-3-O-(1-carboxyvinyl)-alpha-D-glucosamine + phosphate. It participates in cell wall biogenesis; peptidoglycan biosynthesis. In terms of biological role, cell wall formation. Adds enolpyruvyl to UDP-N-acetylglucosamine. The protein is UDP-N-acetylglucosamine 1-carboxyvinyltransferase of Chlamydia muridarum (strain MoPn / Nigg).